A 141-amino-acid polypeptide reads, in one-letter code: Putative pre-16S rRNA nuclease (141 aa).

It belongs to the YqgF nuclease family.

Its subcellular location is the cytoplasm. Could be a nuclease involved in processing of the 5'-end of pre-16S rRNA. This chain is Putative pre-16S rRNA nuclease, found in Dictyoglomus turgidum (strain DSM 6724 / Z-1310).